Reading from the N-terminus, the 425-residue chain is 5-aminovalerate aminotransferase DavT (425 aa).

Residues 112 to 113, Tyr-139, and 240 to 243 each bind pyridoxal 5'-phosphate; these read GS and DEVQ. Residue Lys-269 is modified to N6-(pyridoxal phosphate)lysine. Thr-298 provides a ligand contact to pyridoxal 5'-phosphate.

Belongs to the class-III pyridoxal-phosphate-dependent aminotransferase family. Pyridoxal 5'-phosphate serves as cofactor.

It catalyses the reaction 5-aminopentanoate + 2-oxoglutarate = 5-oxopentanoate + L-glutamate. Functionally, catalyzes the conversion of 5-aminovalerate to 5-oxopentanoate. The protein is 5-aminovalerate aminotransferase DavT (davT) of Pseudomonas putida (strain ATCC 47054 / DSM 6125 / CFBP 8728 / NCIMB 11950 / KT2440).